The following is a 1233-amino-acid chain: Insulin receptor substrate 1 (1233 aa).

Ser-3 is subject to Phosphoserine. The tract at residues 3-133 (SPPDTDGFSD…AGGGCGGSCS (131 aa)) is mediates interaction with PHIP. The PH domain maps to 12–115 (DVRKVGYLRK…WYQALLQLHN (104 aa)). A Phosphoserine; by CK2 modification is found at Ser-99. An IRS-type PTB domain is found at 155–259 (FKEVWQVILK…EAMRAMSDEF (105 aa)). The tract at residues 257–425 (DEFRPRSKSQ…SDGGFISSDE (169 aa)) is disordered. Positions 264–276 (KSQSSSSCSNPIS) are enriched in low complexity. Ser-265 and Ser-302 each carry phosphoserine; by RPS6KB1. Ser-307 is modified (phosphoserine; by IKKB, MAPK8 and RPS6KB1). 4 positions are modified to phosphoserine: Ser-318, Ser-325, Ser-340, and Ser-343. Residues 349–358 (THAHRHRGSS) show a composition bias toward basic residues. Low complexity-rich tracts occupy residues 378 to 399 (SPSA…GSTS) and 407 to 419 (SSAS…SDGG). Ser-414 is subject to Phosphoserine. Phosphothreonine occurs at positions 441 and 448. Phosphotyrosine; by INSR is present on Tyr-460. The YXXM motif 1 motif lies at 460 to 463 (YICM). Position 522 is a phosphoserine; by RPS6KB1 (Ser-522). 2 consecutive short sequence motifs (YXXM motif) follow at residues 546–549 (YTEM) and 608–611 (YMPM). Tyr-608 carries the phosphotyrosine; by INSR modification. The residue at position 612 (Ser-612) is a Phosphoserine. Position 628 is a phosphotyrosine; by INSR (Tyr-628). The YXXM motif 4 motif lies at 628–631 (YMPM). The residue at position 632 (Ser-632) is a Phosphoserine; by RPS6KB1 and ROCK2. The segment at 651-720 (QRVDPNGYMM…PPVESGGGKL (70 aa)) is disordered. Tyr-658 is modified (phosphotyrosine). The YXXM motif 5 signature appears at 658–661 (YMMM). Positions 662 to 689 (SPSGSCSPDIGGGSSSSSSISAAPSGSS) are enriched in low complexity. The YXXM motif 6 signature appears at 727-730 (YMNM). Positions 766–985 (FKHTQRPGEP…VPNSRGDYMT (220 aa)) are disordered. Basic and acidic residues predominate over residues 771-780 (RPGEPEEGAR). Low complexity-rich tracts occupy residues 785-794 (RLSSSSGRLR) and 801-810 (DSSSSTSSDS). Ser-789 is subject to Phosphoserine; by AMPK and SIK2. The residue at position 887 (Ser-887) is a Phosphoserine. Phosphotyrosine; by INSR occurs at positions 891, 935, and 983. The tract at residues 891-893 (YVN) is GRB2-binding. Short sequence motifs (YXXM motif) lie at residues 935 to 938 (YMNM), 983 to 986 (YMTM), and 1006 to 1009 (YADM). Residues 1015–1137 (AEKASLPRPT…GSEDVKRHSS (123 aa)) form a disordered region. The span at 1032-1042 (STASSSASVTP) shows a compositional bias: low complexity. 2 stretches are compositionally biased toward polar residues: residues 1043–1052 (QGATAEQATH) and 1069–1081 (TRVN…NQSA). A phosphoserine mark is found at Ser-1096 and Ser-1097. Residues 1116 to 1129 (AAVGGSGGGGGGGS) show a composition bias toward gly residues. Residue Tyr-1173 is modified to Phosphotyrosine; by INSR. The segment at 1178-1233 (LAKEHSQDCPSQQQSLPPPPPHQPLGSNEGNSPRRSSEDLSNYASISFQKQPEDRQ) is disordered. Residue Lys-1180 forms a Glycyl lysine isopeptide (Lys-Gly) (interchain with G-Cter in ubiquitin) linkage. A compositionally biased stretch (polar residues) spans 1203 to 1227 (GSNEGNSPRRSSEDLSNYASISFQK). Residue Tyr-1220 is modified to Phosphotyrosine; by INSR.

In terms of assembly, interacts (via phosphorylated YXXM motifs) with PIK3R1. Interacts with ROCK1. Interacts with GRB2. Interacts with SOCS7. Interacts (via IRS-type PTB domain) with IGF1R and INSR (via the tyrosine-phosphorylated NPXY motif). Interacts with UBTF and PIK3CA. Interacts (via PH domain) with PHIP. Interacts with FER. Interacts with ALK. Interacts with EIF2AK2/PKR. Interacts with GKAP1. Interacts with DGKZ in the absence of insulin; insulin stimulation decreases this interaction. Found in a ternary complex with DGKZ and PIP5K1A in the absence of insulin stimulation. Interacts with SQSTM1; the interaction is disrupted by the presence of tensin TNS2. Interacts with NCK1 (via SH2 domain). Interacts with NCK2 (via SH3 domain). Interacts with SH2B1; this interaction enhances leptin-induced activation of the PI3-kinase pathway. Interacts with DVL2; this interaction promotes the Wnt/beta-catenin signaling pathway. In terms of processing, serine phosphorylation of IRS1 is a mechanism for insulin resistance. Ser-307 phosphorylation inhibits insulin action through disruption of IRS1 interaction with the insulin receptor. Phosphorylation of Tyr-891 is required for GRB2-binding. Phosphorylated by ALK. Phosphorylated at Ser-265, Ser-302, Ser-632 and Ser-1097 by RPS6KB1; phosphorylation induces accelerated degradation of IRS1. Phosphorylated on tyrosine residues in response to insulin. In skeletal muscles, dephosphorylated on Tyr-608 by TNS2 under anabolic conditions; dephosphorylation results in the proteasomal degradation of IRS1. Ubiquitinated by the Cul7-RING(FBXW8) complex in a mTOR-dependent manner, leading to its degradation: the Cul7-RING(FBXW8) complex recognizes and binds IRS1 previously phosphorylated by S6 kinase (RPS6KB1 or RPS6KB2). Ubiquitinated by TRAF4 through 'Lys-29' linkage; this ubiquitination regulates the interaction of IRS1 with IGFR and IRS1 tyrosine phosphorylation upon IGF1 stimulation. Post-translationally, S-nitrosylation at by BLVRB inhibits its activity. In terms of tissue distribution, expressed in osteoblasts, but not in osteoclasts.

The protein localises to the cytoplasm. It is found in the nucleus. Its function is as follows. Signaling adapter protein that participates in the signal transduction from two prominent receptor tyrosine kinases, insulin receptor/INSR and insulin-like growth factor I receptor/IGF1R. Plays therefore an important role in development, growth, glucose homeostasis as well as lipid metabolism. Upon phosphorylation by the insulin receptor, functions as a signaling scaffold that propagates insulin action through binding to SH2 domain-containing proteins including the p85 regulatory subunit of PI3K, NCK1, NCK2, GRB2 or SHP2. Recruitment of GRB2 leads to the activation of the guanine nucleotide exchange factor SOS1 which in turn triggers the Ras/Raf/MEK/MAPK signaling cascade. Activation of the PI3K/AKT pathway is responsible for most of insulin metabolic effects in the cell, and the Ras/Raf/MEK/MAPK is involved in the regulation of gene expression and in cooperation with the PI3K pathway regulates cell growth and differentiation. Acts a positive regulator of the Wnt/beta-catenin signaling pathway through suppression of DVL2 autophagy-mediated degradation leading to cell proliferation. The sequence is that of Insulin receptor substrate 1 (Irs1) from Mus musculus (Mouse).